The chain runs to 757 residues: Elongation factor G, mitochondrial (757 aa).

A mitochondrion-targeting transit peptide spans 1–39; that stretch reads MLLVPRVPVVMQGKCGLLKISRPLQGSLSRGFHFSRAHR. A tr-type G domain is found at 65–346; sequence QKLRNIGISA…AIVDYLPNPS (282 aa). Residues 74 to 81, 145 to 149, and 199 to 202 contribute to the GTP site; these read AHIDSGKT, DTPGH, and NKMD.

It belongs to the TRAFAC class translation factor GTPase superfamily. Classic translation factor GTPase family. EF-G/EF-2 subfamily.

The protein localises to the mitochondrion. It functions in the pathway protein biosynthesis; polypeptide chain elongation. Mitochondrial GTPase that catalyzes the GTP-dependent ribosomal translocation step during translation elongation. During this step, the ribosome changes from the pre-translocational (PRE) to the post-translocational (POST) state as the newly formed A-site-bound peptidyl-tRNA and P-site-bound deacylated tRNA move to the P and E sites, respectively. Catalyzes the coordinated movement of the two tRNA molecules, the mRNA and conformational changes in the ribosome. This chain is Elongation factor G, mitochondrial, found in Candida glabrata (strain ATCC 2001 / BCRC 20586 / JCM 3761 / NBRC 0622 / NRRL Y-65 / CBS 138) (Yeast).